Reading from the N-terminus, the 85-residue chain is Depressant insect toxin BmK ITa1 (85 aa).

The N-terminal stretch at 1 to 21 (MKLFLLLLISASMLIDGLVNA) is a signal peptide. One can recognise an LCN-type CS-alpha/beta domain in the interval 22 to 82 (DGYIRGSNGC…TWKSESNTCG (61 aa)). 4 cysteine pairs are disulfide-bonded: C31-C81, C35-C56, C42-C63, and C46-C65. Residue G82 is modified to Glycine amide.

It belongs to the long (4 C-C) scorpion toxin superfamily. Sodium channel inhibitor family. Beta subfamily. Expressed by the venom gland.

It is found in the secreted. In terms of biological role, depressant insect toxins cause a transient contraction paralysis followed by a slow flaccid paralysis. They bind voltage-independently to sodium channels (Nav) and block action potentials, primarily by depolarizing the axonal membrane and suppressing the sodium current. The sequence is that of Depressant insect toxin BmK ITa1 from Olivierus martensii (Manchurian scorpion).